A 364-amino-acid polypeptide reads, in one-letter code: Polygalacturonase (364 aa).

The first 21 residues, 1-21 (MVAYALTSMLLSAGALVAAAP), serve as a signal peptide directing secretion. Residues 22–27 (SGLDAR) constitute a propeptide that is removed on maturation. A disulfide bond links C30 and C45. 6 PbH1 repeats span residues 158–188 (VTGL…DIGS), 189–210 (SSGI…AINS), 211–231 (GSDI…SIGS), 240–261 (VKGV…RIKT), 269–291 (VSDI…VIEQ), and 303–348 (TTGV…SITG). D203 (proton donor) is an active-site residue. Residues C205 and C221 are joined by a disulfide bond. H225 is a catalytic residue. N276 carries N-linked (GlcNAc...) asparagine glycosylation. Residues C331 and C336 are joined by a disulfide bond. N340 is a glycosylation site (N-linked (GlcNAc...) asparagine). C355 and C364 form a disulfide bridge.

It belongs to the glycosyl hydrolase 28 family.

The protein resides in the secreted. It carries out the reaction (1,4-alpha-D-galacturonosyl)n+m + H2O = (1,4-alpha-D-galacturonosyl)n + (1,4-alpha-D-galacturonosyl)m.. Its function is as follows. Involved in maceration and soft-rotting of plant tissue. Hydrolyzes the 1,4-alpha glycosidic bonds of de-esterified pectate in the smooth region of the plant cell wall. This is Polygalacturonase (PGN1) from Cochliobolus carbonum (Maize leaf spot fungus).